The chain runs to 148 residues: 3-dehydroquinate dehydratase (148 aa).

The Proton acceptor role is filled by Y24. Substrate-binding residues include N80, H86, and D93. The active-site Proton donor is H106. Substrate is bound by residues 107–108 (IS) and R117.

The protein belongs to the type-II 3-dehydroquinase family. As to quaternary structure, homododecamer.

It carries out the reaction 3-dehydroquinate = 3-dehydroshikimate + H2O. It participates in metabolic intermediate biosynthesis; chorismate biosynthesis; chorismate from D-erythrose 4-phosphate and phosphoenolpyruvate: step 3/7. Catalyzes a trans-dehydration via an enolate intermediate. This is 3-dehydroquinate dehydratase from Acidovorax ebreus (strain TPSY) (Diaphorobacter sp. (strain TPSY)).